Reading from the N-terminus, the 195-residue chain is dITP/XTP pyrophosphatase (195 aa).

Residue 8–13 (TNNQGK) participates in substrate binding. Mg(2+)-binding residues include glutamate 39 and aspartate 68. The Proton acceptor role is filled by aspartate 68. Substrate is bound by residues serine 69, 149 to 152 (FGYD), lysine 172, and 177 to 178 (HR).

This sequence belongs to the HAM1 NTPase family. As to quaternary structure, homodimer. Mg(2+) serves as cofactor.

It catalyses the reaction XTP + H2O = XMP + diphosphate + H(+). The catalysed reaction is dITP + H2O = dIMP + diphosphate + H(+). It carries out the reaction ITP + H2O = IMP + diphosphate + H(+). In terms of biological role, pyrophosphatase that catalyzes the hydrolysis of nucleoside triphosphates to their monophosphate derivatives, with a high preference for the non-canonical purine nucleotides XTP (xanthosine triphosphate), dITP (deoxyinosine triphosphate) and ITP. Seems to function as a house-cleaning enzyme that removes non-canonical purine nucleotides from the nucleotide pool, thus preventing their incorporation into DNA/RNA and avoiding chromosomal lesions. The sequence is that of dITP/XTP pyrophosphatase from Staphylococcus epidermidis (strain ATCC 35984 / DSM 28319 / BCRC 17069 / CCUG 31568 / BM 3577 / RP62A).